A 306-amino-acid polypeptide reads, in one-letter code: tRNA dimethylallyltransferase (306 aa).

12 to 19 serves as a coordination point for ATP; sequence GPTASGKT. 14–19 is a substrate binding site; that stretch reads TASGKT. Interaction with substrate tRNA stretches follow at residues 37–40, 161–165, and 242–247; these read DSAL, QRLSR, and RCVGYR.

Belongs to the IPP transferase family. In terms of assembly, monomer. It depends on Mg(2+) as a cofactor.

The catalysed reaction is adenosine(37) in tRNA + dimethylallyl diphosphate = N(6)-dimethylallyladenosine(37) in tRNA + diphosphate. Its function is as follows. Catalyzes the transfer of a dimethylallyl group onto the adenine at position 37 in tRNAs that read codons beginning with uridine, leading to the formation of N6-(dimethylallyl)adenosine (i(6)A). This is tRNA dimethylallyltransferase from Shewanella amazonensis (strain ATCC BAA-1098 / SB2B).